Reading from the N-terminus, the 412-residue chain is Multifunctional CCA protein (412 aa).

The ATP site is built by Gly8 and Arg11. 2 residues coordinate CTP: Gly8 and Arg11. Residues Asp21 and Asp23 each contribute to the Mg(2+) site. Arg91, Arg137, and Arg140 together coordinate ATP. Residues Arg91, Arg137, and Arg140 each coordinate CTP. One can recognise an HD domain in the interval 228–329 (TGIHTLMTLS…VKLFDSIDAW (102 aa)).

This sequence belongs to the tRNA nucleotidyltransferase/poly(A) polymerase family. Bacterial CCA-adding enzyme type 1 subfamily. In terms of assembly, monomer. Can also form homodimers and oligomers. Requires Mg(2+) as cofactor. It depends on Ni(2+) as a cofactor.

It catalyses the reaction a tRNA precursor + 2 CTP + ATP = a tRNA with a 3' CCA end + 3 diphosphate. The enzyme catalyses a tRNA with a 3' CCA end + 2 CTP + ATP = a tRNA with a 3' CCACCA end + 3 diphosphate. In terms of biological role, catalyzes the addition and repair of the essential 3'-terminal CCA sequence in tRNAs without using a nucleic acid template. Adds these three nucleotides in the order of C, C, and A to the tRNA nucleotide-73, using CTP and ATP as substrates and producing inorganic pyrophosphate. tRNA 3'-terminal CCA addition is required both for tRNA processing and repair. Also involved in tRNA surveillance by mediating tandem CCA addition to generate a CCACCA at the 3' terminus of unstable tRNAs. While stable tRNAs receive only 3'-terminal CCA, unstable tRNAs are marked with CCACCA and rapidly degraded. This is Multifunctional CCA protein from Escherichia coli O8 (strain IAI1).